The chain runs to 214 residues: NAD(P)H-quinone oxidoreductase subunit 5, chloroplastic (214 aa).

The next 2 membrane-spanning stretches (helical) occupy residues 84-104 (LFPLLILLLFTFFIGFIGIPF) and 152-172 (SLAILGLFIAYIFYGSAYSFF).

The protein belongs to the complex I subunit 5 family. In terms of assembly, NDH is composed of at least 16 different subunits, 5 of which are encoded in the nucleus.

It localises to the plastid. The protein resides in the chloroplast thylakoid membrane. It catalyses the reaction a plastoquinone + NADH + (n+1) H(+)(in) = a plastoquinol + NAD(+) + n H(+)(out). The enzyme catalyses a plastoquinone + NADPH + (n+1) H(+)(in) = a plastoquinol + NADP(+) + n H(+)(out). NDH shuttles electrons from NAD(P)H:plastoquinone, via FMN and iron-sulfur (Fe-S) centers, to quinones in the photosynthetic chain and possibly in a chloroplast respiratory chain. The immediate electron acceptor for the enzyme in this species is believed to be plastoquinone. Couples the redox reaction to proton translocation, and thus conserves the redox energy in a proton gradient. This Brachypodium pinnatum (Tor grass) protein is NAD(P)H-quinone oxidoreductase subunit 5, chloroplastic (ndhF).